The following is a 103-amino-acid chain: Pyrimidine/purine nucleoside phosphorylase (103 aa).

This sequence belongs to the nucleoside phosphorylase PpnP family.

It catalyses the reaction a purine D-ribonucleoside + phosphate = a purine nucleobase + alpha-D-ribose 1-phosphate. The catalysed reaction is adenosine + phosphate = alpha-D-ribose 1-phosphate + adenine. It carries out the reaction cytidine + phosphate = cytosine + alpha-D-ribose 1-phosphate. The enzyme catalyses guanosine + phosphate = alpha-D-ribose 1-phosphate + guanine. It catalyses the reaction inosine + phosphate = alpha-D-ribose 1-phosphate + hypoxanthine. The catalysed reaction is thymidine + phosphate = 2-deoxy-alpha-D-ribose 1-phosphate + thymine. It carries out the reaction uridine + phosphate = alpha-D-ribose 1-phosphate + uracil. The enzyme catalyses xanthosine + phosphate = alpha-D-ribose 1-phosphate + xanthine. Its function is as follows. Catalyzes the phosphorolysis of diverse nucleosides, yielding D-ribose 1-phosphate and the respective free bases. Can use uridine, adenosine, guanosine, cytidine, thymidine, inosine and xanthosine as substrates. Also catalyzes the reverse reactions. The polypeptide is Pyrimidine/purine nucleoside phosphorylase (Shewanella sp. (strain W3-18-1)).